The chain runs to 234 residues: Proteasome subunit alpha type-2 (234 aa).

Residue Ala-2 is modified to N-acetylalanine. Phosphotyrosine is present on Tyr-121.

Belongs to the peptidase T1A family. The 26S proteasome consists of a 20S proteasome core and two 19S regulatory subunits. The 20S proteasome core is composed of 28 subunits that are arranged in four stacked rings, resulting in a barrel-shaped structure. The two end rings are each formed by seven alpha subunits, and the two central rings are each formed by seven beta subunits. The catalytic chamber with the active sites is on the inside of the barrel.

It localises to the cytoplasm. The protein localises to the nucleus. In terms of biological role, the proteasome is a multicatalytic proteinase complex which is characterized by its ability to cleave peptides with Arg, Phe, Tyr, Leu, and Glu adjacent to the leaving group at neutral or slightly basic pH. The proteasome has an ATP-dependent proteolytic activity. PSMA2 may have a potential regulatory effect on another component(s) of the proteasome complex through tyrosine phosphorylation. In Carassius auratus (Goldfish), this protein is Proteasome subunit alpha type-2 (psma2).